Reading from the N-terminus, the 383-residue chain is Protein delta homolog 1 (383 aa).

The N-terminal stretch at 1–23 is a signal peptide; it reads MTATEALLRVLLLLLAFGHSTYG. EGF-like domains lie at 24–55, 53–86, 88–125, 127–168, 170–206, and 208–245; these read AECFPACNPQNGFCEDDNVCRCQPGWQGPLCD, LCDQCVTSPGCLHGLCGEPGQCICTDGWDGELCD, DVRACSSAPCANNRTCVSLDDGLYECSCAPGYSGKDCQ, KDGP…NFCE, VANSCTPNPCENDGVCTDIGGDFRCRCPAGFIDKTCS, and PVTNCASSPCQNGGTCLQHTQVSYECLCKPEFTGLTCV. The Extracellular segment spans residues 24-303; the sequence is AECFPACNPQ…KKTPLLTEGQ (280 aa). Intrachain disulfides connect Cys26/Cys37, Cys30/Cys43, Cys45/Cys54, Cys57/Cys68, Cys63/Cys74, Cys76/Cys85, Cys92/Cys103, Cys97/Cys113, Cys115/Cys124, Cys131/Cys144, Cys138/Cys156, and Cys158/Cys167. An O-linked (GalNAc...) serine glycan is attached at Ser94. N-linked (GlcNAc...) asparagine glycosylation occurs at Asn100. Thr143 carries O-linked (GalNAc...) threonine glycosylation. A glycan (O-linked (GalNAc...) serine; partial) is linked at Ser163. Asn165 and Asn172 each carry an N-linked (GlcNAc...) asparagine; atypical; partial glycan. 6 disulfide bridges follow: Cys174/Cys185, Cys179/Cys194, Cys196/Cys205, Cys212/Cys223, Cys217/Cys233, and Cys235/Cys244. Residue Ser214 is glycosylated (O-linked (GalNAc...) serine). O-linked (GalNAc...) threonine; partial glycosylation is present at Thr222. Ser251 is a glycosylation site (O-linked (GalNAc...) serine; partial). Thr256 is a glycosylation site (O-linked (GalNAc...) threonine). O-linked (GalNAc...) serine; partial glycosylation is present at Ser260. The helical transmembrane segment at 304-327 threads the bilayer; sequence AICFTILGVLTSLVVLGTVGIVFL. The Cytoplasmic portion of the chain corresponds to 328–383; that stretch reads NKCETWVSNLRYNHMLRKKKNLLLQYNSGEDLAVNIIFPEKIDMTTFSKEAGDEEI.

In terms of assembly, monomer. Interacts with SH3RF2. N- and O-glycosylated. O-glycosylated with core 1 or possibly core 8 glycans. As to expression, found within the stromal cells in close contact to the vascular structure of placental villi, yolk sac, fetal liver, adrenal cortex and pancreas and in the beta cells of the islets of Langerhans in the adult pancreas. Found also in some forms of neuroendocrine lung tumor tissue.

The protein resides in the membrane. Its subcellular location is the cytoplasm. May have a role in neuroendocrine differentiation. This chain is Protein delta homolog 1 (DLK1), found in Homo sapiens (Human).